Consider the following 674-residue polypeptide: Translation initiation factor IF-2 (674 aa).

A tr-type G domain is found at 174-344 (IRPPVVTVMG…LLVAELREIK (171 aa)). The interval 183–190 (GHVDHGKT) is G1. 183-190 (GHVDHGKT) is a GTP binding site. Residues 208–212 (GITQS) form a G2 region. The segment at 229-232 (DTPG) is G3. GTP contacts are provided by residues 229-233 (DTPGH) and 283-286 (NKID). The interval 283–286 (NKID) is G4. Residues 320-322 (SAR) are G5.

It belongs to the TRAFAC class translation factor GTPase superfamily. Classic translation factor GTPase family. IF-2 subfamily.

It localises to the cytoplasm. Its function is as follows. One of the essential components for the initiation of protein synthesis. Protects formylmethionyl-tRNA from spontaneous hydrolysis and promotes its binding to the 30S ribosomal subunits. Also involved in the hydrolysis of GTP during the formation of the 70S ribosomal complex. The sequence is that of Translation initiation factor IF-2 from Pseudothermotoga lettingae (strain ATCC BAA-301 / DSM 14385 / NBRC 107922 / TMO) (Thermotoga lettingae).